Here is a 458-residue protein sequence, read N- to C-terminus: Adenylosuccinate synthetase (458 aa).

GTP is bound by residues 11-17 (GDEGKGG) and 39-41 (GHT). D12 serves as the catalytic Proton acceptor. Mg(2+) contacts are provided by D12 and G39. IMP contacts are provided by residues 12–15 (DEGK), 37–40 (NAGH), T127, R141, Q232, T247, and R330. H40 serves as the catalytic Proton donor. Position 326-332 (326-332 (TVTGRPR)) interacts with substrate. GTP contacts are provided by residues R332, 358–360 (HLD), and 443–445 (GVG).

Belongs to the adenylosuccinate synthetase family. Homodimer. It depends on Mg(2+) as a cofactor.

It localises to the cytoplasm. It catalyses the reaction IMP + L-aspartate + GTP = N(6)-(1,2-dicarboxyethyl)-AMP + GDP + phosphate + 2 H(+). The protein operates within purine metabolism; AMP biosynthesis via de novo pathway; AMP from IMP: step 1/2. Plays an important role in the de novo pathway of purine nucleotide biosynthesis. Catalyzes the first committed step in the biosynthesis of AMP from IMP. This chain is Adenylosuccinate synthetase, found in Haloarcula marismortui (strain ATCC 43049 / DSM 3752 / JCM 8966 / VKM B-1809) (Halobacterium marismortui).